Reading from the N-terminus, the 278-residue chain is Probable endonuclease 4 (278 aa).

Positions 69, 109, 145, 179, 182, 214, 227, 229, and 259 each coordinate Zn(2+).

Belongs to the AP endonuclease 2 family. Requires Zn(2+) as cofactor.

The catalysed reaction is Endonucleolytic cleavage to 5'-phosphooligonucleotide end-products.. Functionally, endonuclease IV plays a role in DNA repair. It cleaves phosphodiester bonds at apurinic or apyrimidinic (AP) sites, generating a 3'-hydroxyl group and a 5'-terminal sugar phosphate. The chain is Probable endonuclease 4 from Bacteroides fragilis (strain ATCC 25285 / DSM 2151 / CCUG 4856 / JCM 11019 / LMG 10263 / NCTC 9343 / Onslow / VPI 2553 / EN-2).